We begin with the raw amino-acid sequence, 475 residues long: Integrator complex subunit 15 (475 aa).

The disordered stretch occupies residues 402-444 (YPHIHPGRPSPLSPHSPHQSTLSSPHSPHTVLTAHPTHPALAP). Over residues 416 to 430 (HSPHQSTLSSPHSPH) the composition is skewed to low complexity.

It belongs to the Integrator subunit 15 family. In terms of assembly, component of the Integrator complex, composed of core subunits INTS1, INTS2, INTS3, INTS4, INTS5, INTS6, INTS7, INTS8, INTS9/RC74, INTS10, INTS11/CPSF3L, INTS12, INTS13, INTS14 and INTS15. The core complex associates with protein phosphatase 2A subunits PPP2CA and PPP2R1A, to form the Integrator-PP2A (INTAC) complex. INTS15 is part of the tail subcomplex, composed of INTS10, INTS13, INTS14 and INTS15.

It localises to the nucleus. Its subcellular location is the chromosome. Its function is as follows. Component of the integrator complex, a multiprotein complex that terminates RNA polymerase II (Pol II) transcription in the promoter-proximal region of genes. The integrator complex provides a quality checkpoint during transcription elongation by driving premature transcription termination of transcripts that are unfavorably configured for transcriptional elongation: the complex terminates transcription by (1) catalyzing dephosphorylation of the C-terminal domain (CTD) of Pol II subunit POLR2A/RPB1 and SUPT5H/SPT5, (2) degrading the exiting nascent RNA transcript via endonuclease activity and (3) promoting the release of Pol II from bound DNA. The integrator complex is also involved in terminating the synthesis of non-coding Pol II transcripts, such as enhancer RNAs (eRNAs), small nuclear RNAs (snRNAs), telomerase RNAs and long non-coding RNAs (lncRNAs). INTS15 is part of the integrator tail module that acts as a platform for the recruitment of transcription factors at promoters. Within the integrator complex, INTS15 is required to bridge different integrator modules. This Danio rerio (Zebrafish) protein is Integrator complex subunit 15 (ints15).